Consider the following 556-residue polypeptide: Arginine--tRNA ligase (556 aa).

Positions 132–142 (VNPTGDLHLGH) match the 'HIGH' region motif.

Belongs to the class-I aminoacyl-tRNA synthetase family. As to quaternary structure, monomer.

The protein resides in the cytoplasm. It carries out the reaction tRNA(Arg) + L-arginine + ATP = L-arginyl-tRNA(Arg) + AMP + diphosphate. The sequence is that of Arginine--tRNA ligase from Oceanobacillus iheyensis (strain DSM 14371 / CIP 107618 / JCM 11309 / KCTC 3954 / HTE831).